A 338-amino-acid polypeptide reads, in one-letter code: GTPase Obg (338 aa).

An Obg domain is found at 1–159; that stretch reads MKFLDKAIIH…RILRLELILI (159 aa). The OBG-type G domain occupies 160–333; it reads AHVGTLGLPN…IVKKIYDFLK (174 aa). Residues 166-173, 191-195, 213-216, 283-286, and 314-316 contribute to the GTP site; these read GLPNSGKS, FTTLK, DIPG, NKID, and SAI. Mg(2+) contacts are provided by Ser173 and Thr193.

This sequence belongs to the TRAFAC class OBG-HflX-like GTPase superfamily. OBG GTPase family. As to quaternary structure, monomer. It depends on Mg(2+) as a cofactor.

It localises to the cytoplasm. Its function is as follows. An essential GTPase which binds GTP, GDP and possibly (p)ppGpp with moderate affinity, with high nucleotide exchange rates and a fairly low GTP hydrolysis rate. Plays a role in control of the cell cycle, stress response, ribosome biogenesis and in those bacteria that undergo differentiation, in morphogenesis control. This Buchnera aphidicola subsp. Baizongia pistaciae (strain Bp) protein is GTPase Obg.